The chain runs to 408 residues: Succinylornithine transaminase (408 aa).

Lys-252 carries the post-translational modification N6-(pyridoxal phosphate)lysine.

The protein belongs to the class-III pyridoxal-phosphate-dependent aminotransferase family. AstC subfamily. Pyridoxal 5'-phosphate serves as cofactor.

The catalysed reaction is N(2)-succinyl-L-ornithine + 2-oxoglutarate = N-succinyl-L-glutamate 5-semialdehyde + L-glutamate. The protein operates within amino-acid degradation; L-arginine degradation via AST pathway; L-glutamate and succinate from L-arginine: step 3/5. In terms of biological role, catalyzes the transamination of N(2)-succinylornithine and alpha-ketoglutarate into N(2)-succinylglutamate semialdehyde and glutamate. Can also act as an acetylornithine aminotransferase. The polypeptide is Succinylornithine transaminase (Salmonella enteritidis PT4 (strain P125109)).